We begin with the raw amino-acid sequence, 363 residues long: DNA replication and repair protein RecF (363 aa).

30 to 37 (GPNGSGKT) is an ATP binding site.

The protein belongs to the RecF family.

The protein localises to the cytoplasm. Its function is as follows. The RecF protein is involved in DNA metabolism; it is required for DNA replication and normal SOS inducibility. RecF binds preferentially to single-stranded, linear DNA. It also seems to bind ATP. This is DNA replication and repair protein RecF from Chlorobium limicola (strain DSM 245 / NBRC 103803 / 6330).